A 125-amino-acid chain; its full sequence is Alpha-endosulfine (125 aa).

A compositionally biased stretch (basic and acidic residues) spans 1 to 37 (MSDKYIGDSHLEETGEEKQDSQEKEAVTPEKAEEQKL). The tract at residues 1 to 53 (MSDKYIGDSHLEETGEEKQDSQEKEAVTPEKAEEQKLKAKYPNLGQKPGGSDF) is disordered. Phosphothreonine; by CDK2 is present on Thr28. Ser67 carries the phosphoserine; by GWL modification. The tract at residues 81–108 (QLPCAGPDKNLVTGDHIPTPQDLPQRKS) is disordered. Thr99 bears the Phosphothreonine; by CDK2 mark. Ser109 carries the post-translational modification Phosphoserine; by PKA.

Belongs to the endosulfine family. Phosphorylation at Ser-67 by gwl during mitosis is essential for interaction with ppp2r2d (PR55-delta) and subsequent inactivation of PP2A.

It localises to the cytoplasm. Protein phosphatase inhibitor that specifically inhibits protein phosphatase 2A (PP2A) during mitosis. When phosphorylated at Ser-67 during mitosis, specifically interacts with ppp2r2d (PR55-delta) and inhibits its activity, leading to inactivation of PP2A, an essential condition to keep cyclin-B1-CDK1 activity high during M phase. This chain is Alpha-endosulfine (ensa), found in Xenopus tropicalis (Western clawed frog).